The sequence spans 358 residues: Molybdenum import ATP-binding protein ModC (358 aa).

Residues 3–228 (INVKQKLGDL…LEMRPWLPAK (226 aa)) enclose the ABC transporter domain. 30 to 37 (GRSGAGKT) serves as a coordination point for ATP. The Mop domain occupies 289 to 356 (QTSIRNVLLA…IKGVSVTKDD (68 aa)).

It belongs to the ABC transporter superfamily. Molybdate importer (TC 3.A.1.8) family. As to quaternary structure, the complex is composed of two ATP-binding proteins (ModC), two transmembrane proteins (ModB) and a solute-binding protein (ModA).

The protein resides in the cell inner membrane. It catalyses the reaction molybdate(out) + ATP + H2O = molybdate(in) + ADP + phosphate + H(+). Functionally, part of the ABC transporter complex ModABC involved in molybdenum import. Responsible for energy coupling to the transport system. The sequence is that of Molybdenum import ATP-binding protein ModC from Photobacterium profundum (strain SS9).